Here is a 202-residue protein sequence, read N- to C-terminus: Holliday junction resolvase RecU (202 aa).

Mg(2+) contacts are provided by threonine 85, aspartate 87, glutamate 100, and glutamine 119.

Belongs to the RecU family. Mg(2+) is required as a cofactor.

Its subcellular location is the cytoplasm. It carries out the reaction Endonucleolytic cleavage at a junction such as a reciprocal single-stranded crossover between two homologous DNA duplexes (Holliday junction).. Endonuclease that resolves Holliday junction intermediates in genetic recombination. Cleaves mobile four-strand junctions by introducing symmetrical nicks in paired strands. Promotes annealing of linear ssDNA with homologous dsDNA. Required for DNA repair, homologous recombination and chromosome segregation. This is Holliday junction resolvase RecU from Streptococcus equi subsp. equi (strain 4047).